Here is a 704-residue protein sequence, read N- to C-terminus: Polyribonucleotide nucleotidyltransferase (704 aa).

D485 and D491 together coordinate Mg(2+). The KH domain occupies 552-611; that stretch reads PKILTMTINPDKIRDVIGPSGKMINKIIEDTGVKIDIEQDGTIYISSADTNMNNKAREII. The S1 motif domain maps to 621 to 689; it reads GQMYLGTVKR…NQGRVNLSRK (69 aa).

This sequence belongs to the polyribonucleotide nucleotidyltransferase family. Mg(2+) is required as a cofactor.

The protein resides in the cytoplasm. It catalyses the reaction RNA(n+1) + phosphate = RNA(n) + a ribonucleoside 5'-diphosphate. In terms of biological role, involved in mRNA degradation. Catalyzes the phosphorolysis of single-stranded polyribonucleotides processively in the 3'- to 5'-direction. This Halalkalibacterium halodurans (strain ATCC BAA-125 / DSM 18197 / FERM 7344 / JCM 9153 / C-125) (Bacillus halodurans) protein is Polyribonucleotide nucleotidyltransferase.